The chain runs to 189 residues: Interferon alpha-5 (189 aa).

Residues Met-1–Ser-21 form the signal peptide. Intrachain disulfides connect Cys-24–Cys-122 and Cys-52–Cys-162.

Belongs to the alpha/beta interferon family.

Its subcellular location is the secreted. In terms of biological role, produced by macrophages, IFN-alpha have antiviral activities. Interferon stimulates the production of two enzymes: a protein kinase and an oligoadenylate synthetase. In Homo sapiens (Human), this protein is Interferon alpha-5 (IFNA5).